The chain runs to 458 residues: ATP synthase subunit beta (458 aa).

ATP is bound at residue 148–155 (GGAGVGKT).

The protein belongs to the ATPase alpha/beta chains family. F-type ATPases have 2 components, CF(1) - the catalytic core - and CF(0) - the membrane proton channel. CF(1) has five subunits: alpha(3), beta(3), gamma(1), delta(1), epsilon(1). CF(0) has three main subunits: a(1), b(2) and c(9-12). The alpha and beta chains form an alternating ring which encloses part of the gamma chain. CF(1) is attached to CF(0) by a central stalk formed by the gamma and epsilon chains, while a peripheral stalk is formed by the delta and b chains.

The protein localises to the cell inner membrane. It carries out the reaction ATP + H2O + 4 H(+)(in) = ADP + phosphate + 5 H(+)(out). In terms of biological role, produces ATP from ADP in the presence of a proton gradient across the membrane. The catalytic sites are hosted primarily by the beta subunits. This Pseudomonas putida (strain ATCC 700007 / DSM 6899 / JCM 31910 / BCRC 17059 / LMG 24140 / F1) protein is ATP synthase subunit beta.